The sequence spans 309 residues: Short chain dehydrogenase MYCFIDRAFT_6125 (309 aa).

Positions 43, 67, 88, and 150 each coordinate NADP(+). Ser-168 serves as the catalytic Proton donor. The NADP(+) site is built by Tyr-182, Lys-186, Val-215, and Ser-217. The active-site Proton acceptor is Tyr-182. Lys-186 serves as the catalytic Lowers pKa of active site Tyr.

Belongs to the short-chain dehydrogenases/reductases (SDR) family.

The protein operates within secondary metabolite biosynthesis. Its function is as follows. Short chain dehydrogenase; part of the gene cluster that mediates the biosynthesis of an emodin derivative that may be involved in black Sigatoka disease of banana. The pathway begins with the synthesis of atrochrysone thioester by the polyketide synthase PKS8-1. The atrochrysone carboxyl ACP thioesterase MYCFIDRAFT_190111 then breaks the thioester bond and releases the atrochrysone carboxylic acid from PKS8-1. The decarboxylase MYCFIDRAFT_34057 then catalyzes the concerted decarboxylation-elimination required to convert atochrysone carboxylic acid into emodin anthrone, which is further oxidized to emodin by the anthrone oxygenase MYCFIDRAFT_34418. The functions of the other tailoring enzymes as well as the final product of the cluster have still to be identified. The protein is Short chain dehydrogenase MYCFIDRAFT_6125 of Pseudocercospora fijiensis (strain CIRAD86) (Black leaf streak disease fungus).